Consider the following 294-residue polypeptide: Acetylglutamate kinase (294 aa).

Substrate contacts are provided by residues 69-70 (GG), R91, and N190.

Belongs to the acetylglutamate kinase family. ArgB subfamily.

It is found in the cytoplasm. The enzyme catalyses N-acetyl-L-glutamate + ATP = N-acetyl-L-glutamyl 5-phosphate + ADP. It participates in amino-acid biosynthesis; L-arginine biosynthesis; N(2)-acetyl-L-ornithine from L-glutamate: step 2/4. Catalyzes the ATP-dependent phosphorylation of N-acetyl-L-glutamate. This Mycobacterium tuberculosis (strain CDC 1551 / Oshkosh) protein is Acetylglutamate kinase.